We begin with the raw amino-acid sequence, 226 residues long: Triosephosphate isomerase (226 aa).

10–12 (NFK) contacts substrate. Histidine 96 acts as the Electrophile in catalysis. Glutamate 144 functions as the Proton acceptor in the catalytic mechanism. Substrate is bound by residues isoleucine 149, glycine 184, and 205-206 (AS).

The protein belongs to the triosephosphate isomerase family. Homotetramer; dimer of dimers.

The protein localises to the cytoplasm. The catalysed reaction is D-glyceraldehyde 3-phosphate = dihydroxyacetone phosphate. The protein operates within carbohydrate biosynthesis; gluconeogenesis. It functions in the pathway carbohydrate degradation; glycolysis; D-glyceraldehyde 3-phosphate from glycerone phosphate: step 1/1. Functionally, involved in the gluconeogenesis. Catalyzes stereospecifically the conversion of dihydroxyacetone phosphate (DHAP) to D-glyceraldehyde-3-phosphate (G3P). The chain is Triosephosphate isomerase from Methanopyrus kandleri (strain AV19 / DSM 6324 / JCM 9639 / NBRC 100938).